Consider the following 31-residue polypeptide: Cyclotide cter-J (31 aa).

Residues 1–31 (GTVPCGESCVFIPCITGIAGCSCKNKVCYID) constitute a cross-link (cyclopeptide (Gly-Asp)). 3 disulfide bridges follow: Cys-5–Cys-21, Cys-9–Cys-23, and Cys-14–Cys-28.

Contains 3 disulfide bonds. Post-translationally, this is a cyclic peptide.

Functionally, probably participates in a plant defense mechanism. The polypeptide is Cyclotide cter-J (Clitoria ternatea (Butterfly pea)).